The primary structure comprises 300 residues: Histone deacetylase HDT3 (300 aa).

Over residues 98–112 (EDEMDLDSEDEDEEL) the composition is skewed to acidic residues. The tract at residues 98-300 (EDEMDLDSED…AHSKAKHGGK (203 aa)) is disordered. A compositionally biased stretch (basic and acidic residues) spans 119 to 132 (ENGKADEKKQKSQE). Residues 151 to 197 (DDDSDEDETDDSDEDETDDSDEGLSPEEGDDDSSDEDDTSDDEEEDT) are compositionally biased toward acidic residues. Basic and acidic residues predominate over residues 198–211 (PTPKKPEVGKKRAA). Residues 265-275 (SPKSAPKSGVP) are compositionally biased toward low complexity. Residues 274–297 (VPCKSCSKSFISETAPQAHSKAKH) form a C2H2-type zinc finger. Residues 279-290 (CSKSFISETAPQ) are compositionally biased toward polar residues.

This sequence belongs to the histone deacetylase HD2 family. In terms of assembly, multimer. Possibly forms a homotrimer with HDT1 and/or HDT2.

The protein resides in the nucleus. It localises to the nucleolus. Functionally, mediates the deacetylation of lysine residues on the N-terminal part of the core histones (H2A, H2B, H3 and H4). Histone deacetylation gives a tag for epigenetic repression and plays an important role in transcriptional regulation, cell cycle progression and developmental events. The protein is Histone deacetylase HDT3 (HDT3) of Zea mays (Maize).